The primary structure comprises 131 residues: Small ribosomal subunit protein uS9 (131 aa).

Belongs to the universal ribosomal protein uS9 family.

In Haemophilus ducreyi (strain 35000HP / ATCC 700724), this protein is Small ribosomal subunit protein uS9.